We begin with the raw amino-acid sequence, 242 residues long: Carboxy-S-adenosyl-L-methionine synthase (242 aa).

S-adenosyl-L-methionine contacts are provided by residues Tyr-38, 63-65 (GCS), 88-89 (DN), 116-117 (DL), and Arg-199.

This sequence belongs to the class I-like SAM-binding methyltransferase superfamily. Cx-SAM synthase family. Homodimer.

It catalyses the reaction prephenate + S-adenosyl-L-methionine = carboxy-S-adenosyl-L-methionine + 3-phenylpyruvate + H2O. In terms of biological role, catalyzes the conversion of S-adenosyl-L-methionine (SAM) to carboxy-S-adenosyl-L-methionine (Cx-SAM). In Methylococcus capsulatus (strain ATCC 33009 / NCIMB 11132 / Bath), this protein is Carboxy-S-adenosyl-L-methionine synthase.